The following is a 111-amino-acid chain: Large ribosomal subunit protein eL33x (111 aa).

The protein belongs to the eukaryotic ribosomal protein eL33 family.

In Arabidopsis thaliana (Mouse-ear cress), this protein is Large ribosomal subunit protein eL33x (RPL35AD).